A 452-amino-acid polypeptide reads, in one-letter code: Tubulin alpha-1D chain (452 aa).

The MREC motif signature appears at 1 to 4 (MREC). Gln-11 contributes to the GTP binding site. Lys-40 bears the N6-acetyllysine mark. The GTP site is built by Glu-71, Ser-140, Gly-144, Thr-145, Thr-179, Asn-206, and Asn-228. Glu-71 is a Mg(2+) binding site. Residue Glu-254 is part of the active site. Tyr-282 is subject to 3'-nitrotyrosine. Residues 432-452 (YEEVGMDSVEGEGEEEEGDEY) are disordered. Ser-439 is modified (phosphoserine). At Glu-446 the chain carries 5-glutamyl polyglutamate. Tyr-452 is subject to 3'-nitrotyrosine.

The protein belongs to the tubulin family. As to quaternary structure, dimer of alpha and beta chains. A typical microtubule is a hollow water-filled tube with an outer diameter of 25 nm and an inner diameter of 15 nM. Alpha-beta heterodimers associate head-to-tail to form protofilaments running lengthwise along the microtubule wall with the beta-tubulin subunit facing the microtubule plus end conferring a structural polarity. Microtubules usually have 13 protofilaments but different protofilament numbers can be found in some organisms and specialized cells. Mg(2+) is required as a cofactor. Post-translationally, some glutamate residues at the C-terminus are polyglycylated, resulting in polyglycine chains on the gamma-carboxyl group. Glycylation is mainly limited to tubulin incorporated into axonemes (cilia and flagella) whereas glutamylation is prevalent in neuronal cells, centrioles, axonemes, and the mitotic spindle. Both modifications can coexist on the same protein on adjacent residues, and lowering polyglycylation levels increases polyglutamylation, and reciprocally. Cilia and flagella glycylation is required for their stability and maintenance. Flagella glycylation controls sperm motility. Some glutamate residues at the C-terminus are polyglutamylated, resulting in polyglutamate chains on the gamma-carboxyl group. Polyglutamylation plays a key role in microtubule severing by spastin (SPAST). SPAST preferentially recognizes and acts on microtubules decorated with short polyglutamate tails: severing activity by SPAST increases as the number of glutamates per tubulin rises from one to eight, but decreases beyond this glutamylation threshold. Glutamylation is also involved in cilia motility. In terms of processing, acetylation of alpha chains at Lys-40 is located inside the microtubule lumen. This modification has been correlated with increased microtubule stability, intracellular transport and ciliary assembly. Post-translationally, methylation of alpha chains at Lys-40 is found in mitotic microtubules and is required for normal mitosis and cytokinesis contributing to genomic stability. Nitration of Tyr-452 is irreversible and interferes with normal dynein intracellular distribution. In terms of processing, undergoes a tyrosination/detyrosination cycle, the cyclic removal and re-addition of a C-terminal tyrosine residue by the enzymes tubulin tyrosine carboxypeptidase (MATCAP, VASH1 or VASH2) and tubulin tyrosine ligase (TTL), respectively. Post-translationally, tyrosination promotes microtubule interaction with CAP-Gly domain-containing proteins such as CLIP1, CLIP2 and DCTN1. Tyrosination regulates the initiation of dynein-dynactin motility via interaction with DCTN1, which brings the dynein-dynactin complex into contact with microtubules. In neurons, tyrosinated tubulins mediate the initiation of retrograde vesicle transport. Detyrosination is involved in metaphase plate congression by guiding chromosomes during mitosis: detyrosination promotes interaction with CENPE, promoting pole-proximal transport of chromosomes toward the equator. Detyrosination increases microtubules-dependent mechanotransduction in dystrophic cardiac and skeletal muscle. In cardiomyocytes, detyrosinated microtubules are required to resist to contractile compression during contraction: detyrosination promotes association with desmin (DES) at force-generating sarcomeres, leading to buckled microtubules and mechanical resistance to contraction.

It localises to the cytoplasm. It is found in the cytoskeleton. It catalyses the reaction GTP + H2O = GDP + phosphate + H(+). Its function is as follows. Tubulin is the major constituent of microtubules, a cylinder consisting of laterally associated linear protofilaments composed of alpha- and beta-tubulin heterodimers. Microtubules grow by the addition of GTP-tubulin dimers to the microtubule end, where a stabilizing cap forms. Below the cap, tubulin dimers are in GDP-bound state, owing to GTPase activity of alpha-tubulin. This Bos taurus (Bovine) protein is Tubulin alpha-1D chain (TUBA1D).